The following is a 623-amino-acid chain: Glutathione import ATP-binding protein GsiA (623 aa).

ABC transporter domains lie at 15 to 269 (VENL…RALL) and 314 to 564 (LRVR…RKLL). Residues 49–56 (GESGSGKS) and 357–364 (GESGSGKS) each bind ATP.

This sequence belongs to the ABC transporter superfamily. Glutathione importer (TC 3.A.1.5.11) family. The complex is composed of two ATP-binding proteins (GsiA), two transmembrane proteins (GsiC and GsiD) and a solute-binding protein (GsiB).

It is found in the cell inner membrane. It carries out the reaction glutathione(out) + ATP + H2O = glutathione(in) + ADP + phosphate + H(+). Part of the ABC transporter complex GsiABCD involved in glutathione import. Responsible for energy coupling to the transport system. The chain is Glutathione import ATP-binding protein GsiA from Shigella dysenteriae serotype 1 (strain Sd197).